The sequence spans 334 residues: Glutaminase (334 aa).

7 residues coordinate substrate: serine 76, asparagine 126, glutamate 170, asparagine 177, tyrosine 201, tyrosine 253, and valine 271.

It belongs to the glutaminase family. As to quaternary structure, homotetramer.

It catalyses the reaction L-glutamine + H2O = L-glutamate + NH4(+). The chain is Glutaminase from Trichormus variabilis (strain ATCC 29413 / PCC 7937) (Anabaena variabilis).